A 241-amino-acid chain; its full sequence is Uridylate kinase (241 aa).

Residue 15–18 coordinates ATP; it reads KLSG. An involved in allosteric activation by GTP region spans residues 23-28; the sequence is GSEGFG. Gly-57 is a binding site for UMP. ATP contacts are provided by Gly-58 and Arg-62. Residues Asp-77 and 138 to 145 each bind UMP; that span reads TGNPFFTT. Thr-165, Phe-171, and Asp-174 together coordinate ATP.

The protein belongs to the UMP kinase family. As to quaternary structure, homohexamer.

Its subcellular location is the cytoplasm. The catalysed reaction is UMP + ATP = UDP + ADP. Its pathway is pyrimidine metabolism; CTP biosynthesis via de novo pathway; UDP from UMP (UMPK route): step 1/1. Its activity is regulated as follows. Allosterically activated by GTP. Inhibited by UTP. Catalyzes the reversible phosphorylation of UMP to UDP. This chain is Uridylate kinase, found in Vibrio vulnificus (strain CMCP6).